Reading from the N-terminus, the 343-residue chain is Inositol 2-dehydrogenase (343 aa).

This sequence belongs to the Gfo/Idh/MocA family. Homotetramer.

It catalyses the reaction myo-inositol + NAD(+) = scyllo-inosose + NADH + H(+). Functionally, involved in the oxidation of myo-inositol (MI) to 2-keto-myo-inositol (2KMI or 2-inosose). This Streptomyces avermitilis (strain ATCC 31267 / DSM 46492 / JCM 5070 / NBRC 14893 / NCIMB 12804 / NRRL 8165 / MA-4680) protein is Inositol 2-dehydrogenase.